The following is a 153-amino-acid chain: Probable phospholipase A2 homolog 2 (153 aa).

Residues 1–25 form the signal peptide; sequence MRFFLKLAPRCSVLLLLLLVTASRG. Disulfide bonds link Cys42–Cys70, Cys46–Cys76, Cys51–Cys123, Cys63–Cys83, Cys82–Cys109, and Cys89–Cys102. Ca(2+)-binding residues include Tyr62, Gly64, and Tyr67. The active site involves His86. Residue Asp87 coordinates Ca(2+).

The protein belongs to the phospholipase A2 family. Requires Ca(2+) as cofactor.

The protein localises to the secreted. The catalysed reaction is a 1,2-diacyl-sn-glycero-3-phosphocholine + H2O = a 1-acyl-sn-glycero-3-phosphocholine + a fatty acid + H(+). In terms of biological role, PA2 catalyzes the calcium-dependent hydrolysis of the 2-acyl groups in 3-sn-phosphoglycerides. Releases lysophospholipids (LPLs) and free fatty acids (FFAs) from membrane phospholipids in response to hormones and other external stimuli. This Oryza sativa subsp. japonica (Rice) protein is Probable phospholipase A2 homolog 2 (PLA2-II).